The primary structure comprises 173 residues: Ribosome maturation factor RimM (173 aa).

Residues 98–171 form the PRC barrel domain; it reads DDQYYYDEII…LITIDALEGL (74 aa).

It belongs to the RimM family. In terms of assembly, binds ribosomal protein uS19.

The protein resides in the cytoplasm. Functionally, an accessory protein needed during the final step in the assembly of 30S ribosomal subunit, possibly for assembly of the head region. Essential for efficient processing of 16S rRNA. May be needed both before and after RbfA during the maturation of 16S rRNA. It has affinity for free ribosomal 30S subunits but not for 70S ribosomes. The sequence is that of Ribosome maturation factor RimM from Leuconostoc mesenteroides subsp. mesenteroides (strain ATCC 8293 / DSM 20343 / BCRC 11652 / CCM 1803 / JCM 6124 / NCDO 523 / NBRC 100496 / NCIMB 8023 / NCTC 12954 / NRRL B-1118 / 37Y).